A 211-amino-acid polypeptide reads, in one-letter code: Protein-L-isoaspartate O-methyltransferase (211 aa).

Ser62 is an active-site residue.

It belongs to the methyltransferase superfamily. L-isoaspartyl/D-aspartyl protein methyltransferase family.

Its subcellular location is the cytoplasm. It carries out the reaction [protein]-L-isoaspartate + S-adenosyl-L-methionine = [protein]-L-isoaspartate alpha-methyl ester + S-adenosyl-L-homocysteine. Its function is as follows. Catalyzes the methyl esterification of L-isoaspartyl residues in peptides and proteins that result from spontaneous decomposition of normal L-aspartyl and L-asparaginyl residues. It plays a role in the repair and/or degradation of damaged proteins. This Shewanella frigidimarina (strain NCIMB 400) protein is Protein-L-isoaspartate O-methyltransferase.